The sequence spans 236 residues: Probable transmembrane ascorbate ferrireductase 4 (236 aa).

Residues 14–210 (FARLSGLVVA…LGCIVITAAI (197 aa)) enclose the Cytochrome b561 domain. The next 3 helical transmembrane spans lie at 17-37 (LSGL…PNLG), 42-62 (TLHP…AILI), and 76-96 (VHLW…WTKF). Residues H44, H77, and H110 each coordinate heme b. A run of 3 helical transmembrane segments spans residues 112–132 (WMGL…FMSF), 144–164 (TFLP…IATA), and 191–211 (VNGL…AAIL). H149 is a heme b binding site.

Homodimer. Requires heme b as cofactor.

The protein resides in the membrane. The catalysed reaction is Fe(3+)(out) + L-ascorbate(in) = monodehydro-L-ascorbate radical(in) + Fe(2+)(out) + H(+). Two-heme-containing cytochrome. May catalyze ascorbate-dependent trans-membrane ferric-chelate reduction. This Arabidopsis thaliana (Mouse-ear cress) protein is Probable transmembrane ascorbate ferrireductase 4 (CYB561D).